The primary structure comprises 61 residues: Metallothionein-2 (61 aa).

Methionine 1 bears the N-acetylmethionine mark. Residues 1–29 (MDPNCSCAAGGSCTCAGSCKCKECRCTSC) are beta. Positions 5, 7, 13, 15, 19, 21, 24, 26, 29, 33, 34, 36, 37, 41, 44, 48, 50, and 57 each coordinate a divalent metal cation. An alpha region spans residues 30–61 (KKSCCSCCPVGCAKCAQGCICKGASDKCSCCA). At serine 58 the chain carries Phosphoserine. Residues cysteine 59 and cysteine 60 each contribute to the a divalent metal cation site.

This sequence belongs to the metallothionein superfamily. Type 1 family. Interacts with EOLA1.

Metallothioneins have a high content of cysteine residues that bind various heavy metals; these proteins are transcriptionally regulated by both heavy metals and glucocorticoids. In Canis lupus familiaris (Dog), this protein is Metallothionein-2 (MT2A).